A 400-amino-acid polypeptide reads, in one-letter code: Lysophospholipid transporter LplT (400 aa).

12 helical membrane-spanning segments follow: residues 19–39 (VIVA…ATLA), 53–73 (VLQM…GQMA), 91–111 (AGAA…LVGI), 139–159 (LMEA…GVLA), 164–184 (IAAL…NLFI), 195–213 (SWRL…VVLW), 227–247 (LFWG…PVAL), 257–277 (YLNA…AKLV), 281–301 (TVSR…IFSL), 304–324 (ALLP…FFVV), 352–372 (NSAM…GVPA), and 373–393 (VAIG…LWIW).

Belongs to the major facilitator superfamily. LplT (TC 2.A.1.42) family.

The protein localises to the cell inner membrane. Catalyzes the facilitated diffusion of 2-acyl-glycero-3-phosphoethanolamine (2-acyl-GPE) into the cell. The chain is Lysophospholipid transporter LplT from Salmonella enteritidis PT4 (strain P125109).